A 242-amino-acid polypeptide reads, in one-letter code: Ribonuclease PH (242 aa).

Residues arginine 89 and 127–129 (GTR) each bind phosphate.

The protein belongs to the RNase PH family. In terms of assembly, homohexameric ring arranged as a trimer of dimers.

The catalysed reaction is tRNA(n+1) + phosphate = tRNA(n) + a ribonucleoside 5'-diphosphate. Phosphorolytic 3'-5' exoribonuclease that plays an important role in tRNA 3'-end maturation. Removes nucleotide residues following the 3'-CCA terminus of tRNAs; can also add nucleotides to the ends of RNA molecules by using nucleoside diphosphates as substrates, but this may not be physiologically important. Probably plays a role in initiation of 16S rRNA degradation (leading to ribosome degradation) during starvation. This is Ribonuclease PH from Neisseria meningitidis serogroup B (strain ATCC BAA-335 / MC58).